Consider the following 163-residue polypeptide: MTSPTAPFWQTVPLDQMSSEQWESLCDGCGRCCLNKLRDEDTEEVIYTNVACRLLDTHTCRCTDYADRHRKVPDCVTLTPELLAEIDWLPPSCSYRLLRDGFDLPDWHPLRTGNEKGVHSSGASVQDRCISERRAGPLEDHLEDWPGEWPDRSPLCHALKRKG.

Belongs to the UPF0260 family.

The protein is UPF0260 protein GOX1406 of Gluconobacter oxydans (strain 621H) (Gluconobacter suboxydans).